The primary structure comprises 149 residues: Arginine regulator (149 aa).

This sequence belongs to the ArgR family.

It is found in the cytoplasm. It functions in the pathway amino-acid degradation; L-arginine degradation via ADI pathway. Functionally, regulates the transcription of the arc operon, involved in arginine catabolism. The sequence is that of Arginine regulator (argR1) from Bacillus cereus (strain ATCC 14579 / DSM 31 / CCUG 7414 / JCM 2152 / NBRC 15305 / NCIMB 9373 / NCTC 2599 / NRRL B-3711).